Consider the following 210-residue polypeptide: Probable glutathione peroxidase 8 (210 aa).

The helical transmembrane segment at 21-40 (VLLSMTVGVGCLLLLQTQLL) threads the bilayer.

This sequence belongs to the glutathione peroxidase family.

It is found in the membrane. The enzyme catalyses 2 glutathione + H2O2 = glutathione disulfide + 2 H2O. This chain is Probable glutathione peroxidase 8 (gpx8), found in Tetraodon nigroviridis (Spotted green pufferfish).